The following is a 183-amino-acid chain: Shikimate kinase (183 aa).

G25 to T30 provides a ligand contact to ATP. T29 provides a ligand contact to Mg(2+). Substrate-binding residues include D47, R71, and G93. Residue R131 coordinates ATP. R150 is a substrate binding site.

It belongs to the shikimate kinase family. In terms of assembly, monomer. Mg(2+) is required as a cofactor.

The protein localises to the cytoplasm. It carries out the reaction shikimate + ATP = 3-phosphoshikimate + ADP + H(+). It participates in metabolic intermediate biosynthesis; chorismate biosynthesis; chorismate from D-erythrose 4-phosphate and phosphoenolpyruvate: step 5/7. Its function is as follows. Catalyzes the specific phosphorylation of the 3-hydroxyl group of shikimic acid using ATP as a cosubstrate. The sequence is that of Shikimate kinase from Dechloromonas aromatica (strain RCB).